A 195-amino-acid polypeptide reads, in one-letter code: Large ribosomal subunit protein bL9 (195 aa).

It belongs to the bacterial ribosomal protein bL9 family.

Binds to the 23S rRNA. The chain is Large ribosomal subunit protein bL9 from Rhodopseudomonas palustris (strain TIE-1).